Consider the following 474-residue polypeptide: L-arabinose isomerase (474 aa).

Positions 306, 331, 348, and 447 each coordinate Mn(2+).

This sequence belongs to the arabinose isomerase family. The cofactor is Mn(2+).

It carries out the reaction beta-L-arabinopyranose = L-ribulose. It functions in the pathway carbohydrate degradation; L-arabinose degradation via L-ribulose; D-xylulose 5-phosphate from L-arabinose (bacterial route): step 1/3. Functionally, catalyzes the conversion of L-arabinose to L-ribulose. The protein is L-arabinose isomerase of Oceanobacillus iheyensis (strain DSM 14371 / CIP 107618 / JCM 11309 / KCTC 3954 / HTE831).